The chain runs to 392 residues: Succinyl-diaminopimelate desuccinylase (392 aa).

His78 is a binding site for Zn(2+). The active site involves Asp80. Asp110 serves as a coordination point for Zn(2+). Glu145 serves as the catalytic Proton acceptor. Zn(2+) is bound by residues Glu146, Glu174, and His363.

The protein belongs to the peptidase M20A family. DapE subfamily. Homodimer. Requires Zn(2+) as cofactor. The cofactor is Co(2+).

It carries out the reaction N-succinyl-(2S,6S)-2,6-diaminopimelate + H2O = (2S,6S)-2,6-diaminopimelate + succinate. It functions in the pathway amino-acid biosynthesis; L-lysine biosynthesis via DAP pathway; LL-2,6-diaminopimelate from (S)-tetrahydrodipicolinate (succinylase route): step 3/3. Catalyzes the hydrolysis of N-succinyl-L,L-diaminopimelic acid (SDAP), forming succinate and LL-2,6-diaminopimelate (DAP), an intermediate involved in the bacterial biosynthesis of lysine and meso-diaminopimelic acid, an essential component of bacterial cell walls. In Methylobacterium radiotolerans (strain ATCC 27329 / DSM 1819 / JCM 2831 / NBRC 15690 / NCIMB 10815 / 0-1), this protein is Succinyl-diaminopimelate desuccinylase.